A 280-amino-acid chain; its full sequence is Tryptophan synthase alpha chain (280 aa).

Residues E49 and D60 each act as proton acceptor in the active site.

It belongs to the TrpA family. As to quaternary structure, tetramer of two alpha and two beta chains.

The catalysed reaction is (1S,2R)-1-C-(indol-3-yl)glycerol 3-phosphate + L-serine = D-glyceraldehyde 3-phosphate + L-tryptophan + H2O. Its pathway is amino-acid biosynthesis; L-tryptophan biosynthesis; L-tryptophan from chorismate: step 5/5. The alpha subunit is responsible for the aldol cleavage of indoleglycerol phosphate to indole and glyceraldehyde 3-phosphate. The polypeptide is Tryptophan synthase alpha chain (Corynebacterium glutamicum (strain R)).